A 505-amino-acid chain; its full sequence is Katanin p60 ATPase-containing subunit A-like 2 (505 aa).

Residues 25-57 form the LisH domain; that stretch reads RRKNLLILIMHYLLQEGYVDSANSLEQETKISS. 2 disordered regions span residues 94–127 and 140–167; these read LDHD…IGQQ and RTNG…EASE. 2 stretches are compositionally biased toward polar residues: residues 114–127 and 155–164; these read GSNS…IGQQ and QESGGNSPQE. 298–305 provides a ligand contact to ATP; sequence GPPGTGKT.

Belongs to the AAA ATPase family. Katanin p60 subunit A1 subfamily. A-like 2 sub-subfamily.

The protein localises to the cytoplasm. The protein resides in the cytoskeleton. Its subcellular location is the spindle. It is found in the spindle pole. It carries out the reaction n ATP + n H2O + a microtubule = n ADP + n phosphate + (n+1) alpha/beta tubulin heterodimers.. Its function is as follows. Severs microtubules in vitro in an ATP-dependent manner. This activity may promote rapid reorganization of cellular microtubule arrays. In Xenopus laevis (African clawed frog), this protein is Katanin p60 ATPase-containing subunit A-like 2 (katnal2).